The following is a 274-amino-acid chain: Bis(5'-nucleosyl)-tetraphosphatase, symmetrical (274 aa).

Belongs to the Ap4A hydrolase family.

The enzyme catalyses P(1),P(4)-bis(5'-adenosyl) tetraphosphate + H2O = 2 ADP + 2 H(+). Its function is as follows. Hydrolyzes diadenosine 5',5'''-P1,P4-tetraphosphate to yield ADP. The polypeptide is Bis(5'-nucleosyl)-tetraphosphatase, symmetrical (Shewanella oneidensis (strain ATCC 700550 / JCM 31522 / CIP 106686 / LMG 19005 / NCIMB 14063 / MR-1)).